The sequence spans 29 residues: Cyclotide psyleio B (29 aa).

The cyclopeptide (Gly-Arg) cross-link spans 1–29 (GDLPICGETCFGGTCNTPGCVCAWPVCNR). 3 cysteine pairs are disulfide-bonded: C6–C20, C10–C22, and C15–C27.

Post-translationally, this is a cyclic peptide.

In terms of biological role, probably participates in a plant defense mechanism. The chain is Cyclotide psyleio B from Psychotria brachyceras.